Here is a 572-residue protein sequence, read N- to C-terminus: Sialate:O-sulfotransferase 1 (572 aa).

Topologically, residues 1–14 (MAKPFFRLQKFLRR) are cytoplasmic. A helical; Signal-anchor for type II membrane protein membrane pass occupies residues 15–35 (TQFLLLFLTAAYLMTGSLLLL). Residues 36–572 (QRARVALPQA…AGLPREYVPR (537 aa)) lie on the Extracellular side of the membrane. The N-linked (GlcNAc...) asparagine glycan is linked to N105. 2 WSC domains span residues 139 to 231 (RGNY…YSVG) and 242 to 337 (TATY…DTRC). N254 carries an N-linked (GlcNAc...) asparagine glycan.

It belongs to the WSCD family.

The protein resides in the golgi apparatus membrane. The catalysed reaction is a ganglioside GM1b + 3'-phosphoadenylyl sulfate = an 8-O-sulfo-ganglioside GM1b + adenosine 3',5'-bisphosphate + H(+). Functionally, sialate:O-sulfotransferase which catalyzes 8-O-sulfation at the Sia-glycan level using 3'-phosphoadenosine 5'-phosphosulfate (PAPS) as a donor, forming 8-O-sulfated Sia (Sia8S)-glycans. Displays selectivity toward glycolipids such as GM1 gangliosides. The protein is Sialate:O-sulfotransferase 1 (Wscd1) of Mus musculus (Mouse).